Consider the following 430-residue polypeptide: GTPase Obg (430 aa).

The 158-residue stretch at 1 to 158 (MFVDQVKISL…LDVSLELKLL (158 aa)) folds into the Obg domain. The tract at residues 118–145 (KGGRGGRGNSRFATPRNPAPDFSEKGEP) is disordered. One can recognise an OBG-type G domain in the interval 159-329 (ADVGLVGFPS…LLYAIADKLE (171 aa)). Residues 165-172 (GFPSVGKS), 190-194 (FTTIK), 212-215 (DLPG), 282-285 (NKMD), and 310-312 (STI) each bind GTP. Mg(2+) is bound by residues S172 and T192. The OCT domain maps to 352 to 430 (KHTPSQDKFT…ILGGEFEFVE (79 aa)).

The protein belongs to the TRAFAC class OBG-HflX-like GTPase superfamily. OBG GTPase family. In terms of assembly, monomer. Mg(2+) is required as a cofactor.

Its subcellular location is the cytoplasm. Its function is as follows. An essential GTPase which binds GTP, GDP and possibly (p)ppGpp with moderate affinity, with high nucleotide exchange rates and a fairly low GTP hydrolysis rate. Plays a role in control of the cell cycle, stress response, ribosome biogenesis and in those bacteria that undergo differentiation, in morphogenesis control. This Staphylococcus aureus (strain bovine RF122 / ET3-1) protein is GTPase Obg.